The primary structure comprises 649 residues: Lipoteichoic acid synthase 2 (649 aa).

Residues 1 to 9 lie on the Cytoplasmic side of the membrane; that stretch reads MKTFIKERG. Residues 10–30 form a helical membrane-spanning segment; it reads LAFFLIAVVLLWIKTYVGYVL. Over 31-42 the chain is Extracellular; it reads NFNLGIDNTIQK. A helical transmembrane segment spans residues 43 to 63; that stretch reads ILLFVNPLSSSLFFLGFGLLF. The Cytoplasmic portion of the chain corresponds to 64 to 69; that stretch reads KKKLQQ. Residues 70 to 90 traverse the membrane as a helical segment; that stretch reads TAIIVIHFLMSFLLYANIVYY. Residues 91 to 118 lie on the Extracellular side of the membrane; sequence RFFNDFITIPVIMQAKTNGGQLGDSAFS. Residues 119 to 139 form a helical membrane-spanning segment; it reads LMRPTDAFYFIDTIILIILAI. Residues 140–151 lie on the Cytoplasmic side of the membrane; that stretch reads KVNKPAETSSKK. A helical transmembrane segment spans residues 152 to 172; it reads SFRIIFASSILVFLINLAVAE. Residues 173 to 649 lie on the Extracellular side of the membrane; it reads SDRPELLTRS…SETSKDNEDK (477 aa). Mn(2+) is bound by residues glutamate 253 and threonine 297. Threonine 297 is a catalytic residue. Residue histidine 412 participates in substrate binding. Residues aspartate 471 and histidine 472 each contribute to the Mn(2+) site. Residues 622 to 649 form a disordered region; sequence FKKVNPSDYDYTKHDEDSSETSKDNEDK. Positions 631–649 are enriched in basic and acidic residues; that stretch reads DYTKHDEDSSETSKDNEDK.

This sequence belongs to the LTA synthase family. Post-translationally, proteolytically cleaved.

The protein resides in the cell membrane. It localises to the secreted. The protein operates within cell wall biogenesis; lipoteichoic acid biosynthesis. Functionally, catalyzes the polymerization of lipoteichoic acid (LTA) polyglycerol phosphate, a reaction that presumably uses phosphatidylglycerol (PG) as substrate. This chain is Lipoteichoic acid synthase 2 (ltaS2), found in Bacillus subtilis (strain 168).